A 258-amino-acid chain; its full sequence is Imidazole glycerol phosphate synthase subunit HisF (258 aa).

Catalysis depends on residues Asp11 and Asp130.

Belongs to the HisA/HisF family. As to quaternary structure, heterodimer of HisH and HisF.

The protein localises to the cytoplasm. The enzyme catalyses 5-[(5-phospho-1-deoxy-D-ribulos-1-ylimino)methylamino]-1-(5-phospho-beta-D-ribosyl)imidazole-4-carboxamide + L-glutamine = D-erythro-1-(imidazol-4-yl)glycerol 3-phosphate + 5-amino-1-(5-phospho-beta-D-ribosyl)imidazole-4-carboxamide + L-glutamate + H(+). Its pathway is amino-acid biosynthesis; L-histidine biosynthesis; L-histidine from 5-phospho-alpha-D-ribose 1-diphosphate: step 5/9. Functionally, IGPS catalyzes the conversion of PRFAR and glutamine to IGP, AICAR and glutamate. The HisF subunit catalyzes the cyclization activity that produces IGP and AICAR from PRFAR using the ammonia provided by the HisH subunit. This chain is Imidazole glycerol phosphate synthase subunit HisF, found in Salmonella agona (strain SL483).